The sequence spans 123 residues: Small ribosomal subunit protein uS12 (123 aa).

Residues 1-32 (MPTINQLIRKPREAQKARDKAPALQSSPQKRG) form a disordered region. A compositionally biased stretch (basic and acidic residues) spans 10–21 (KPREAQKARDKA). Position 89 is a 3-methylthioaspartic acid (aspartate 89).

It belongs to the universal ribosomal protein uS12 family. In terms of assembly, part of the 30S ribosomal subunit. Contacts proteins S8 and S17. May interact with IF1 in the 30S initiation complex.

With S4 and S5 plays an important role in translational accuracy. Its function is as follows. Interacts with and stabilizes bases of the 16S rRNA that are involved in tRNA selection in the A site and with the mRNA backbone. Located at the interface of the 30S and 50S subunits, it traverses the body of the 30S subunit contacting proteins on the other side and probably holding the rRNA structure together. The combined cluster of proteins S8, S12 and S17 appears to hold together the shoulder and platform of the 30S subunit. In Azorhizobium caulinodans (strain ATCC 43989 / DSM 5975 / JCM 20966 / LMG 6465 / NBRC 14845 / NCIMB 13405 / ORS 571), this protein is Small ribosomal subunit protein uS12.